Reading from the N-terminus, the 139-residue chain is MTNDSASHTPSDNTEMTEMQRYVTQQRGTEPAFSGKLLHNKRTGAYHCLCCQAPLFYSDSKYDSGCGWPSFDQPVSSEAVRYLEDESHNMRRIEIRCGQCDAHLGHVFPDGPKTTGERYCVNSASLSFIDDVDGERVDG.

The 123-residue stretch at 9 to 131 (TPSDNTEMTE…NSASLSFIDD (123 aa)) folds into the MsrB domain. Zn(2+) is bound by residues C48, C51, C97, and C100. The active-site Nucleophile is C120.

It belongs to the MsrB Met sulfoxide reductase family. Requires Zn(2+) as cofactor.

It catalyses the reaction L-methionyl-[protein] + [thioredoxin]-disulfide + H2O = L-methionyl-(R)-S-oxide-[protein] + [thioredoxin]-dithiol. The chain is Peptide methionine sulfoxide reductase MsrB from Pectobacterium atrosepticum (strain SCRI 1043 / ATCC BAA-672) (Erwinia carotovora subsp. atroseptica).